Here is a 281-residue protein sequence, read N- to C-terminus: CMT1A duplicated region transcript 15 protein-like protein (281 aa).

2 disordered regions span residues 107-131 and 150-187; these read KPAW…DQPS and AENV…HGGG. Over residues 108-120 the composition is skewed to basic and acidic residues; it reads PAWEEPPPERALE. Residues 165-178 show a composition bias toward low complexity; the sequence is STAPASRSHAAPSP. The helical transmembrane segment at 207–227 threads the bilayer; that stretch reads AGTTALLLQGLFIVLILVGYI.

It is found in the membrane. This is CMT1A duplicated region transcript 15 protein-like protein (CDRT15L2) from Homo sapiens (Human).